The sequence spans 192 residues: Lipid A acyltransferase PagP (192 aa).

Residues 1–26 form the signal peptide; that stretch reads MTVVNKSFLTILIFFCQILFPLNASA. Residues His-64, Asp-107, and Ser-108 contribute to the active site.

It belongs to the lipid A palmitoyltransferase family. In terms of assembly, homodimer.

It localises to the cell outer membrane. The enzyme catalyses a lipid A + a 1,2-diacyl-sn-glycero-3-phosphocholine = a hepta-acyl lipid A + a 2-acyl-sn-glycero-3-phosphocholine. It carries out the reaction a lipid IVA + a 1,2-diacyl-sn-glycero-3-phosphocholine = a lipid IVB + a 2-acyl-sn-glycero-3-phosphocholine. It catalyses the reaction a lipid IIA + a 1,2-diacyl-sn-glycero-3-phosphocholine = a lipid IIB + a 2-acyl-sn-glycero-3-phosphocholine. Transfers a fatty acid residue from the sn-1 position of a phospholipid to the N-linked hydroxyfatty acid chain on the proximal unit of lipid A or its precursors. In Cronobacter sakazakii (strain ATCC BAA-894) (Enterobacter sakazakii), this protein is Lipid A acyltransferase PagP.